The following is a 181-amino-acid chain: Small ribosomal subunit protein uS4 (181 aa).

One can recognise an S4 RNA-binding domain in the interval 104 to 166 (RRLQTIVYKK…VTSSFKSRPP (63 aa)).

The protein belongs to the universal ribosomal protein uS4 family. Part of the 30S ribosomal subunit. Contacts protein S5. The interaction surface between S4 and S5 is involved in control of translational fidelity.

Its function is as follows. One of the primary rRNA binding proteins, it binds directly to 16S rRNA where it nucleates assembly of the body of the 30S subunit. With S5 and S12 plays an important role in translational accuracy. In Saccharolobus islandicus (strain Y.N.15.51 / Yellowstone #2) (Sulfolobus islandicus), this protein is Small ribosomal subunit protein uS4.